A 336-amino-acid chain; its full sequence is Biotin synthase (336 aa).

Residues asparagine 54 to arginine 281 enclose the Radical SAM core domain. Residues cysteine 69, cysteine 73, and cysteine 76 each coordinate [4Fe-4S] cluster. Cysteine 113, cysteine 144, cysteine 204, and arginine 276 together coordinate [2Fe-2S] cluster.

It belongs to the radical SAM superfamily. Biotin synthase family. In terms of assembly, homodimer. [4Fe-4S] cluster is required as a cofactor. The cofactor is [2Fe-2S] cluster.

The catalysed reaction is (4R,5S)-dethiobiotin + (sulfur carrier)-SH + 2 reduced [2Fe-2S]-[ferredoxin] + 2 S-adenosyl-L-methionine = (sulfur carrier)-H + biotin + 2 5'-deoxyadenosine + 2 L-methionine + 2 oxidized [2Fe-2S]-[ferredoxin]. It functions in the pathway cofactor biosynthesis; biotin biosynthesis; biotin from 7,8-diaminononanoate: step 2/2. Catalyzes the conversion of dethiobiotin (DTB) to biotin by the insertion of a sulfur atom into dethiobiotin via a radical-based mechanism. In Burkholderia pseudomallei (strain 1710b), this protein is Biotin synthase.